A 293-amino-acid polypeptide reads, in one-letter code: Diaminopimelate epimerase (293 aa).

Residues Asn-15, Gln-47, and Asn-67 each contribute to the substrate site. Residue Cys-76 is the Proton donor of the active site. Substrate-binding positions include Gly-77–Asn-78, Asn-163, Asn-197, and Glu-215–Arg-216. The active-site Proton acceptor is Cys-224. Gly-225 to Ser-226 is a substrate binding site.

It belongs to the diaminopimelate epimerase family. Homodimer.

It localises to the cytoplasm. It carries out the reaction (2S,6S)-2,6-diaminopimelate = meso-2,6-diaminopimelate. Its pathway is amino-acid biosynthesis; L-lysine biosynthesis via DAP pathway; DL-2,6-diaminopimelate from LL-2,6-diaminopimelate: step 1/1. In terms of biological role, catalyzes the stereoinversion of LL-2,6-diaminopimelate (L,L-DAP) to meso-diaminopimelate (meso-DAP), a precursor of L-lysine and an essential component of the bacterial peptidoglycan. The sequence is that of Diaminopimelate epimerase from Chelativorans sp. (strain BNC1).